A 675-amino-acid chain; its full sequence is UvrABC system protein B (675 aa).

Positions 32 to 417 constitute a Helicase ATP-binding domain; that stretch reads EGLSDGLAYQ…EHAGQVVEQV (386 aa). 45–52 contacts ATP; it reads GVTGSGKT. A Beta-hairpin motif is present at residues 98–121; it reads YYDYYQPEAYVPSRDLFIEKDSAI. The region spanning 436 to 602 is the Helicase C-terminal domain; it reads QVDDLMSEIN…QIKKQVKDII (167 aa). Residues 634-669 enclose the UVR domain; the sequence is IKEIAKLEKAMQQAARDLQFEEAAVLRDRIRDIKEN.

Belongs to the UvrB family. Forms a heterotetramer with UvrA during the search for lesions. Interacts with UvrC in an incision complex.

It is found in the cytoplasm. The UvrABC repair system catalyzes the recognition and processing of DNA lesions. A damage recognition complex composed of 2 UvrA and 2 UvrB subunits scans DNA for abnormalities. Upon binding of the UvrA(2)B(2) complex to a putative damaged site, the DNA wraps around one UvrB monomer. DNA wrap is dependent on ATP binding by UvrB and probably causes local melting of the DNA helix, facilitating insertion of UvrB beta-hairpin between the DNA strands. Then UvrB probes one DNA strand for the presence of a lesion. If a lesion is found the UvrA subunits dissociate and the UvrB-DNA preincision complex is formed. This complex is subsequently bound by UvrC and the second UvrB is released. If no lesion is found, the DNA wraps around the other UvrB subunit that will check the other stand for damage. The protein is UvrABC system protein B of Neisseria meningitidis serogroup B (strain ATCC BAA-335 / MC58).